The primary structure comprises 408 residues: Na(+)-translocating NADH-quinone reductase subunit F (408 aa).

The helical transmembrane segment at 6-26 (IILGVVMFTAIVLALVAIILA) threads the bilayer. The region spanning 35–127 (GDVTIRINGE…DMDVEVPEEV (93 aa)) is the 2Fe-2S ferredoxin-type domain. Positions 70, 76, 79, and 111 each coordinate [2Fe-2S] cluster. Positions 130-270 (VKAWECTVES…YGPFGEFFAK (141 aa)) constitute an FAD-binding FR-type domain.

It belongs to the NqrF family. In terms of assembly, composed of six subunits; NqrA, NqrB, NqrC, NqrD, NqrE and NqrF. It depends on [2Fe-2S] cluster as a cofactor. The cofactor is FAD.

The protein resides in the cell inner membrane. The catalysed reaction is a ubiquinone + n Na(+)(in) + NADH + H(+) = a ubiquinol + n Na(+)(out) + NAD(+). Its function is as follows. NQR complex catalyzes the reduction of ubiquinone-1 to ubiquinol by two successive reactions, coupled with the transport of Na(+) ions from the cytoplasm to the periplasm. The first step is catalyzed by NqrF, which accepts electrons from NADH and reduces ubiquinone-1 to ubisemiquinone by a one-electron transfer pathway. This Marinomonas sp. (strain MWYL1) protein is Na(+)-translocating NADH-quinone reductase subunit F.